The primary structure comprises 726 residues: Disintegrin and metalloproteinase domain-containing protein 20 (726 aa).

A signal peptide spans Met1–Ala31. Residues Arg32–Gln206 constitute a propeptide that is removed on maturation. Positions Met171–Glu178 match the Cysteine switch motif. Cys173 serves as a coordination point for Zn(2+). Asn191 and Asn226 each carry an N-linked (GlcNAc...) asparagine glycan. A Peptidase M12B domain is found at Arg207–Tyr400. Residues Arg207–Tyr693 lie on the Extracellular side of the membrane. Disulfide bonds link Cys317–Cys394, Cys357–Cys379, and Cys359–Cys364. Residue His342 coordinates Zn(2+). Glu343 is a catalytic residue. 2 residues coordinate Zn(2+): His346 and His352. Asn378, Asn438, Asn479, and Asn587 each carry an N-linked (GlcNAc...) asparagine glycan. One can recognise a Disintegrin domain in the interval Leu407–Asp493. Cys465 and Cys485 are oxidised to a cystine. 3 disulfides stabilise this stretch: Cys635–Cys646, Cys640–Cys652, and Cys654–Cys663. The region spanning Cys635–Cys663 is the EGF-like domain. A helical membrane pass occupies residues Leu694–Phe714. The Cytoplasmic portion of the chain corresponds to Lys715 to Gly726.

Zn(2+) is required as a cofactor. In terms of processing, has no obvious cleavage site for furin endopeptidase, suggesting that the proteolytic processing is regulated. In terms of tissue distribution, testis specific.

Its subcellular location is the membrane. Its function is as follows. May be involved in sperm maturation and/or fertilization. This Homo sapiens (Human) protein is Disintegrin and metalloproteinase domain-containing protein 20 (ADAM20).